A 360-amino-acid polypeptide reads, in one-letter code: Phosphoserine aminotransferase (360 aa).

Residue Arg42 coordinates L-glutamate. Residues 76–77, Trp102, Thr152, Asp172, and Gln195 contribute to the pyridoxal 5'-phosphate site; that span reads AS. Lys196 is modified (N6-(pyridoxal phosphate)lysine). 237 to 238 contacts pyridoxal 5'-phosphate; sequence NT.

It belongs to the class-V pyridoxal-phosphate-dependent aminotransferase family. SerC subfamily. Homodimer. It depends on pyridoxal 5'-phosphate as a cofactor.

It localises to the cytoplasm. The catalysed reaction is O-phospho-L-serine + 2-oxoglutarate = 3-phosphooxypyruvate + L-glutamate. It carries out the reaction 4-(phosphooxy)-L-threonine + 2-oxoglutarate = (R)-3-hydroxy-2-oxo-4-phosphooxybutanoate + L-glutamate. The protein operates within amino-acid biosynthesis; L-serine biosynthesis; L-serine from 3-phospho-D-glycerate: step 2/3. Functionally, catalyzes the reversible conversion of 3-phosphohydroxypyruvate to phosphoserine and of 3-hydroxy-2-oxo-4-phosphonooxybutanoate to phosphohydroxythreonine. The protein is Phosphoserine aminotransferase of Bacillus cereus (strain ATCC 10987 / NRS 248).